A 290-amino-acid polypeptide reads, in one-letter code: Lipoyl synthase 2 (290 aa).

[4Fe-4S] cluster-binding residues include Cys-37, Cys-42, Cys-48, Cys-63, Cys-67, Cys-70, and Ser-283. Positions 49–272 constitute a Radical SAM core domain; sequence YGQKTATFLL…GNIARELGFS (224 aa).

Belongs to the radical SAM superfamily. Lipoyl synthase family. Requires [4Fe-4S] cluster as cofactor.

It localises to the cytoplasm. It catalyses the reaction [[Fe-S] cluster scaffold protein carrying a second [4Fe-4S](2+) cluster] + N(6)-octanoyl-L-lysyl-[protein] + 2 oxidized [2Fe-2S]-[ferredoxin] + 2 S-adenosyl-L-methionine + 4 H(+) = [[Fe-S] cluster scaffold protein] + N(6)-[(R)-dihydrolipoyl]-L-lysyl-[protein] + 4 Fe(3+) + 2 hydrogen sulfide + 2 5'-deoxyadenosine + 2 L-methionine + 2 reduced [2Fe-2S]-[ferredoxin]. It participates in protein modification; protein lipoylation via endogenous pathway; protein N(6)-(lipoyl)lysine from octanoyl-[acyl-carrier-protein]: step 2/2. In terms of biological role, catalyzes the radical-mediated insertion of two sulfur atoms into the C-6 and C-8 positions of the octanoyl moiety bound to the lipoyl domains of lipoate-dependent enzymes, thereby converting the octanoylated domains into lipoylated derivatives. This chain is Lipoyl synthase 2, found in Thermosynechococcus vestitus (strain NIES-2133 / IAM M-273 / BP-1).